The chain runs to 103 residues: Co-chaperonin GroES (103 aa).

The protein belongs to the GroES chaperonin family. Heptamer of 7 subunits arranged in a ring. Interacts with the chaperonin GroEL.

The protein resides in the cytoplasm. In terms of biological role, together with the chaperonin GroEL, plays an essential role in assisting protein folding. The GroEL-GroES system forms a nano-cage that allows encapsulation of the non-native substrate proteins and provides a physical environment optimized to promote and accelerate protein folding. GroES binds to the apical surface of the GroEL ring, thereby capping the opening of the GroEL channel. The sequence is that of Co-chaperonin GroES from Prochlorococcus marinus (strain MIT 9211).